The chain runs to 425 residues: Actin-related protein 3 (425 aa).

It belongs to the actin family. ARP3 subfamily. In terms of assembly, component of the Arp2/3 complex, at least composed of arx-1, arx-2, arx-4 and arx-6.

It localises to the cytoplasm. Its subcellular location is the cytoskeleton. Its function is as follows. Functions as ATP-binding component of the Arp2/3 complex which is involved in regulation of actin polymerization and together with an activating nucleation-promoting factor (NPF) mediates the formation of branched actin networks. Seems to contact the pointed end of the daughter actin filament. Plays a role in time-dependent memory loss and the retention of conditioned behavior over time. The polypeptide is Actin-related protein 3 (Caenorhabditis elegans).